Consider the following 688-residue polypeptide: Glycine--tRNA ligase beta subunit (688 aa).

This sequence belongs to the class-II aminoacyl-tRNA synthetase family. In terms of assembly, tetramer of two alpha and two beta subunits.

Its subcellular location is the cytoplasm. It carries out the reaction tRNA(Gly) + glycine + ATP = glycyl-tRNA(Gly) + AMP + diphosphate. This Shewanella oneidensis (strain ATCC 700550 / JCM 31522 / CIP 106686 / LMG 19005 / NCIMB 14063 / MR-1) protein is Glycine--tRNA ligase beta subunit.